Here is a 498-residue protein sequence, read N- to C-terminus: Excisase C (498 aa).

Residues 263–446 enclose the Tyr recombinase domain; it reads KIIYSFDLFE…FGIENRKKAF (184 aa). Residues Arg-306, Lys-336, Arg-401, and His-424 contribute to the active site. Tyr-433 functions as the O-(3'-phospho-DNA)-tyrosine intermediate in the catalytic mechanism.

This sequence belongs to the XisA/XisC recombinase family.

Functionally, essential for DNA excision. Site specific recombinase necessary for the excision of the 10.5 kb hupL element during heterocyst differentiation. This chain is Excisase C (xisC), found in Nostoc sp. (strain PCC 7120 / SAG 25.82 / UTEX 2576).